The chain runs to 118 residues: MLLKSTTRHIRLYTAEIKNSELVPSDNVLTLDVDPDNEFNWGEDSLQKVYRKFDELVESYSGQDLTDYNLRRIGSDLEHFIRSLLQKGDISYNLQSRVLNYSMGLPKVESPETEGKYR.

This sequence belongs to the complex I NdhM subunit family. In terms of assembly, NDH-1 can be composed of about 15 different subunits; different subcomplexes with different compositions have been identified which probably have different functions.

It localises to the cellular thylakoid membrane. The enzyme catalyses a plastoquinone + NADH + (n+1) H(+)(in) = a plastoquinol + NAD(+) + n H(+)(out). The catalysed reaction is a plastoquinone + NADPH + (n+1) H(+)(in) = a plastoquinol + NADP(+) + n H(+)(out). In terms of biological role, NDH-1 shuttles electrons from an unknown electron donor, via FMN and iron-sulfur (Fe-S) centers, to quinones in the respiratory and/or the photosynthetic chain. The immediate electron acceptor for the enzyme in this species is believed to be plastoquinone. Couples the redox reaction to proton translocation, and thus conserves the redox energy in a proton gradient. Cyanobacterial NDH-1 also plays a role in inorganic carbon-concentration. In Rippkaea orientalis (strain PCC 8801 / RF-1) (Cyanothece sp. (strain PCC 8801)), this protein is NAD(P)H-quinone oxidoreductase subunit M.